The sequence spans 101 residues: Replication restart protein PriB (101 aa).

The SSB domain maps to 1 to 101; sequence MTTNNLVLAG…LHAENVELKT (101 aa).

The protein belongs to the PriB family. As to quaternary structure, homodimer. Interacts with PriA and DnaT. Component of the replication restart primosome. Primosome assembly occurs via a 'hand-off' mechanism. PriA binds to replication forks, subsequently PriB then DnaT bind; DnaT then displaces ssDNA to generate the helicase loading substrate.

In terms of biological role, involved in the restart of stalled replication forks, which reloads the replicative helicase on sites other than the origin of replication; the PriA-PriB pathway is the major replication restart pathway. During primosome assembly it facilitates complex formation between PriA and DnaT on DNA; stabilizes PriA on DNA. Stimulates the DNA unwinding activity of PriA helicase. This is Replication restart protein PriB from Shewanella pealeana (strain ATCC 700345 / ANG-SQ1).